Here is a 397-residue protein sequence, read N- to C-terminus: FAD-dependent monooxygenase trt8 (397 aa).

Y53 is an active-site residue. Residues D145 and A158 each contribute to the FAD site.

It belongs to the paxM FAD-dependent monooxygenase family. FAD serves as cofactor.

Its pathway is secondary metabolite biosynthesis; terpenoid biosynthesis. In terms of biological role, FAD-dependent monooxygenase; part of the gene cluster that mediates the biosynthesis of terretonin, a fungal meroterpenoid that acts as a mycotoxin. The first step of the pathway is the synthesis of 3,5-dimethylorsellinic acid (DMOA) by the polyketide synthase trt4. DMOA is then prenylated into farnesyl-DMOA by the polyprenyl transferase trt2. Methylation by the methyltransferase trt5 then leads to farnesyl-DMOA methyl ester which is further subject to epoxidation by the FAD-dependent monooxygenase trt8 to yield epoxyfarnesyl-DMOA methyl ester. Cyclization of epoxyfarnesyl-DMOA methyl ester by the terpene cyclase trt1 leads to a tetracycle intermediate which is in turn converted to preterretonin. Dehydrogenase trt9 comes next to transform preterretonin to preterrenoid. The FAD-dependent monooxygenase trt3 is then required for the C-hydroxylation at C16 of preterrenoid to yield terrenoid. The cytochrome P450 trt6 catalyzes three successive oxidations to transform terrenoid into an unstable intermediate, which then undergoes the D-ring expansion and unusual rearrangement of the methoxy group to afford the core skeleton of terretonin. Trt14 catalyzes the D-ring expansion of terretonin involving intramolecular methoxy rearrangement as well as the hydrolysis of the expanded D-ring and the methyl ester moiety. Finally, the nonheme iron-dependent dioxygenase trt7 accomplishes the last two oxidation reactions steps to complete the biosynthesis of terretonin. Terretonin C is produced via spontaneous decarboxylation of the terretonin precursor. Another shunt product of the terretonin biosynthesis is dihydrofarnesyl-DMOA, derived from epoxyfarnesyl-DMOA through hydrolysis of the epoxide. The sequence is that of FAD-dependent monooxygenase trt8 from Aspergillus terreus (strain NIH 2624 / FGSC A1156).